Reading from the N-terminus, the 161-residue chain is Cyclic pyranopterin monophosphate synthase (161 aa).

Substrate-binding positions include 73-75 (LCH) and 110-111 (ME). Asp125 is an active-site residue.

Belongs to the MoaC family. Homohexamer; trimer of dimers.

The catalysed reaction is (8S)-3',8-cyclo-7,8-dihydroguanosine 5'-triphosphate = cyclic pyranopterin phosphate + diphosphate. It functions in the pathway cofactor biosynthesis; molybdopterin biosynthesis. Functionally, catalyzes the conversion of (8S)-3',8-cyclo-7,8-dihydroguanosine 5'-triphosphate to cyclic pyranopterin monophosphate (cPMP). In Pseudomonas syringae pv. tomato (strain ATCC BAA-871 / DC3000), this protein is Cyclic pyranopterin monophosphate synthase.